The chain runs to 355 residues: Peptide chain release factor 1 (355 aa).

Gln-231 carries the N5-methylglutamine modification.

The protein belongs to the prokaryotic/mitochondrial release factor family. Post-translationally, methylated by PrmC. Methylation increases the termination efficiency of RF1.

It is found in the cytoplasm. In terms of biological role, peptide chain release factor 1 directs the termination of translation in response to the peptide chain termination codons UAG and UAA. The chain is Peptide chain release factor 1 from Nautilia profundicola (strain ATCC BAA-1463 / DSM 18972 / AmH).